The primary structure comprises 64 residues: Temporin-ALf (64 aa).

Residues 1-22 (MFTLKKSLLLLFFLGTINLSLC) form the signal peptide. Positions 23-46 (EQERNAEEERRDEPDERNAEVEKR) are excised as a propeptide. Leucine 62 is subject to Leucine amide.

Expressed by the skin glands.

It localises to the secreted. Its function is as follows. Antimicrobial peptide with activity against Gram-positive and Gram-negative bacteria and against fungi. Has been tested against S.aureus (MIC=2.5 ug/mL), B.pumilus (MIC=5.0 ug/mL), B.cereus (MIC=30.0 ug/mL), E.coli (MIC=2.5 ug/mL), B.dysenteriae (MIC=5.0 ug/mL), A.cacoaceticus (MIC=30.0 ug/mL), P.aeruginosa (MIC=5.0 ug/mL) and C.albicans (MIC=2.5 ug/mL). Also shows a weak hemolytic activity. This Amolops loloensis (Lolokou Sucker Frog) protein is Temporin-ALf.